We begin with the raw amino-acid sequence, 274 residues long: Large ribosomal subunit protein uL2 (274 aa).

A disordered region spans residues 224–274 (AMNPVDHPHGGGEGRTGEGQVPVSPWNTMTKGYRTRSNKRTQTFIVSRRKK). Residues 229 to 239 (DHPHGGGEGRT) show a composition bias toward basic and acidic residues.

The protein belongs to the universal ribosomal protein uL2 family. Part of the 50S ribosomal subunit. Forms a bridge to the 30S subunit in the 70S ribosome.

Functionally, one of the primary rRNA binding proteins. Required for association of the 30S and 50S subunits to form the 70S ribosome, for tRNA binding and peptide bond formation. It has been suggested to have peptidyltransferase activity; this is somewhat controversial. Makes several contacts with the 16S rRNA in the 70S ribosome. The sequence is that of Large ribosomal subunit protein uL2 from Methylibium petroleiphilum (strain ATCC BAA-1232 / LMG 22953 / PM1).